The following is a 93-amino-acid chain: Large ribosomal subunit protein uL23cz/uL23cy (93 aa).

Belongs to the universal ribosomal protein uL23 family. Part of the 50S ribosomal subunit.

It localises to the plastid. It is found in the chloroplast. Functionally, binds to 23S rRNA. In Helianthus annuus (Common sunflower), this protein is Large ribosomal subunit protein uL23cz/uL23cy (rpl23-A).